The chain runs to 469 residues: Glutamine synthetase (469 aa).

One can recognise a GS beta-grasp domain in the interval 14–98 (NDVKYVDLRF…VVCDVLEPTT (85 aa)). The GS catalytic domain occupies 106–469 (PRGIAKKAMA…PVEFEMYYSV (364 aa)). 2 residues coordinate Mg(2+): Glu131 and Glu133. Glu209 serves as a coordination point for ATP. Glu214 and Glu221 together coordinate Mg(2+). Residues 265–266 (NG) and Gly266 contribute to the L-glutamate site. A Mg(2+)-binding site is contributed by His270. Residues 272 to 274 (HQS) and Ser274 contribute to the ATP site. L-glutamate contacts are provided by Arg322, Glu328, and Arg340. Arg340, Arg345, and Lys353 together coordinate ATP. Residue Glu358 coordinates Mg(2+). An L-glutamate-binding site is contributed by Arg360. Residue Tyr398 is modified to O-AMP-tyrosine.

Belongs to the glutamine synthetase family. As to quaternary structure, oligomer of 12 subunits arranged in the form of two hexameric ring. Mg(2+) is required as a cofactor.

It localises to the cytoplasm. It catalyses the reaction L-glutamate + NH4(+) + ATP = L-glutamine + ADP + phosphate + H(+). Its activity is regulated as follows. The activity of this enzyme could be controlled by adenylation under conditions of abundant glutamine. Catalyzes the ATP-dependent biosynthesis of glutamine from glutamate and ammonia. The chain is Glutamine synthetase from Azorhizobium caulinodans (strain ATCC 43989 / DSM 5975 / JCM 20966 / LMG 6465 / NBRC 14845 / NCIMB 13405 / ORS 571).